We begin with the raw amino-acid sequence, 205 residues long: MRINLFVNILFGTACIIIFGLVILISYKLYRYIPKRNNSNKVYKEDYPSIMARAISCLIYFLPLLEGIAQFGIVCIDDHSWIRIIYKNTLAYIVVPYLESPLIGFCIFITLYLIFVRGIIQISKFIKFHIVQALLLYLLDSVIGTVLTSLPLEIGYSFIGDRLADTLLLITFMISIYAGTDALKGQYSNIPLISEAAKMQSKSTD.

5 consecutive transmembrane segments (helical) span residues 5–25 (LFVN…VILI), 54–74 (AISC…FGIV), 102–122 (LIGF…IIQI), 130–150 (IVQA…LTSL), and 163–183 (LADT…TDAL).

This sequence belongs to the Tic20 family.

It localises to the plastid. Its subcellular location is the chloroplast membrane. The sequence is that of Tic20 family protein Ycf60 (ycf60) from Cyanidium caldarium (Red alga).